A 248-amino-acid chain; its full sequence is Triosephosphate isomerase (248 aa).

Positions 10 and 12 each coordinate substrate. His-95 functions as the Electrophile in the catalytic mechanism. The Proton acceptor role is filled by Glu-165.

It belongs to the triosephosphate isomerase family. Homodimer.

The protein resides in the cytoplasm. The catalysed reaction is D-glyceraldehyde 3-phosphate = dihydroxyacetone phosphate. It participates in carbohydrate biosynthesis; gluconeogenesis. The protein operates within carbohydrate degradation; glycolysis; D-glyceraldehyde 3-phosphate from glycerone phosphate: step 1/1. The chain is Triosephosphate isomerase (TPI1) from Candida albicans (strain SC5314 / ATCC MYA-2876) (Yeast).